A 254-amino-acid chain; its full sequence is Phosphonates import ATP-binding protein PhnC 2 (254 aa).

Residues 4-248 (LEVNNLGKHY…KIESIYGFQQ (245 aa)) form the ABC transporter domain. 37-44 (GPSGAGKS) lines the ATP pocket.

The protein belongs to the ABC transporter superfamily. Phosphonates importer (TC 3.A.1.9.1) family. The complex is composed of two ATP-binding proteins (PhnC), two transmembrane proteins (PhnE) and a solute-binding protein (PhnD).

The protein resides in the cell membrane. The catalysed reaction is phosphonate(out) + ATP + H2O = phosphonate(in) + ADP + phosphate + H(+). Part of the ABC transporter complex PhnCDE involved in phosphonates import. Responsible for energy coupling to the transport system. This is Phosphonates import ATP-binding protein PhnC 2 from Oceanobacillus iheyensis (strain DSM 14371 / CIP 107618 / JCM 11309 / KCTC 3954 / HTE831).